Consider the following 223-residue polypeptide: Phosphoribosylformylglycinamidine synthase subunit PurQ (223 aa).

Residues 4–223 (KIGVITFPGT…FLSAIGTIAA (220 aa)) enclose the Glutamine amidotransferase type-1 domain. The active-site Nucleophile is the Cys87. Catalysis depends on residues His195 and Glu197.

Part of the FGAM synthase complex composed of 1 PurL, 1 PurQ and 2 PurS subunits.

It is found in the cytoplasm. The catalysed reaction is N(2)-formyl-N(1)-(5-phospho-beta-D-ribosyl)glycinamide + L-glutamine + ATP + H2O = 2-formamido-N(1)-(5-O-phospho-beta-D-ribosyl)acetamidine + L-glutamate + ADP + phosphate + H(+). The enzyme catalyses L-glutamine + H2O = L-glutamate + NH4(+). The protein operates within purine metabolism; IMP biosynthesis via de novo pathway; 5-amino-1-(5-phospho-D-ribosyl)imidazole from N(2)-formyl-N(1)-(5-phospho-D-ribosyl)glycinamide: step 1/2. Part of the phosphoribosylformylglycinamidine synthase complex involved in the purines biosynthetic pathway. Catalyzes the ATP-dependent conversion of formylglycinamide ribonucleotide (FGAR) and glutamine to yield formylglycinamidine ribonucleotide (FGAM) and glutamate. The FGAM synthase complex is composed of three subunits. PurQ produces an ammonia molecule by converting glutamine to glutamate. PurL transfers the ammonia molecule to FGAR to form FGAM in an ATP-dependent manner. PurS interacts with PurQ and PurL and is thought to assist in the transfer of the ammonia molecule from PurQ to PurL. This chain is Phosphoribosylformylglycinamidine synthase subunit PurQ, found in Corynebacterium efficiens (strain DSM 44549 / YS-314 / AJ 12310 / JCM 11189 / NBRC 100395).